The chain runs to 422 residues: Light-independent protochlorophyllide reductase subunit N (422 aa).

The [4Fe-4S] cluster site is built by Cys26, Cys51, and Cys112.

It belongs to the BchN/ChlN family. As to quaternary structure, protochlorophyllide reductase is composed of three subunits; BchL, BchN and BchB. Forms a heterotetramer of two BchB and two BchN subunits. [4Fe-4S] cluster is required as a cofactor.

The catalysed reaction is chlorophyllide a + oxidized 2[4Fe-4S]-[ferredoxin] + 2 ADP + 2 phosphate = protochlorophyllide a + reduced 2[4Fe-4S]-[ferredoxin] + 2 ATP + 2 H2O. It functions in the pathway porphyrin-containing compound metabolism; bacteriochlorophyll biosynthesis (light-independent). In terms of biological role, component of the dark-operative protochlorophyllide reductase (DPOR) that uses Mg-ATP and reduced ferredoxin to reduce ring D of protochlorophyllide (Pchlide) to form chlorophyllide a (Chlide). This reaction is light-independent. The NB-protein (BchN-BchB) is the catalytic component of the complex. In Acidiphilium rubrum, this protein is Light-independent protochlorophyllide reductase subunit N.